The following is a 137-amino-acid chain: 1,4-dihydroxy-2-naphthoyl-CoA hydrolase (137 aa).

Asp-12 is an active-site residue.

This sequence belongs to the 4-hydroxybenzoyl-CoA thioesterase family. DHNA-CoA hydrolase subfamily.

It carries out the reaction 1,4-dihydroxy-2-naphthoyl-CoA + H2O = 1,4-dihydroxy-2-naphthoate + CoA + H(+). It functions in the pathway cofactor biosynthesis; phylloquinone biosynthesis. Its pathway is quinol/quinone metabolism; 1,4-dihydroxy-2-naphthoate biosynthesis; 1,4-dihydroxy-2-naphthoate from chorismate: step 7/7. Functionally, catalyzes the hydrolysis of 1,4-dihydroxy-2-naphthoyl-CoA (DHNA-CoA) to 1,4-dihydroxy-2-naphthoate (DHNA), a reaction involved in phylloquinone (vitamin K1) biosynthesis. The polypeptide is 1,4-dihydroxy-2-naphthoyl-CoA hydrolase (Acaryochloris marina (strain MBIC 11017)).